A 312-amino-acid polypeptide reads, in one-letter code: Probable rRNA-processing protein EBP2 (312 aa).

A disordered region spans residues 1-32 (MLHHEDESSPESDSDFDASELTDKELQEAFSQ). Residues 8–20 (SSPESDSDFDASE) show a composition bias toward acidic residues. Residues 140–176 (EMAKTDQHMQKIRHKLQLKQASMEKSEKAKQLRALRK) are a coiled coil. A disordered region spans residues 211 to 312 (LDFLEGDQTP…VRQKMKSKRR (102 aa)). The span at 282–312 (KGPHRPGKKGGKNANKRPGKNVRQKMKSKRR) shows a compositional bias: basic residues.

Belongs to the EBP2 family.

It is found in the nucleus. The protein localises to the nucleolus. Required for the processing of the 27S pre-rRNA. This Xenopus laevis (African clawed frog) protein is Probable rRNA-processing protein EBP2 (ebna1bp2).